The primary structure comprises 391 residues: Ferrochelatase (391 aa).

Fe cation contacts are provided by His-196 and Glu-281.

This sequence belongs to the ferrochelatase family.

The protein resides in the cytoplasm. It carries out the reaction heme b + 2 H(+) = protoporphyrin IX + Fe(2+). It functions in the pathway porphyrin-containing compound metabolism; protoheme biosynthesis; protoheme from protoporphyrin-IX: step 1/1. In terms of biological role, catalyzes the ferrous insertion into protoporphyrin IX. The polypeptide is Ferrochelatase (Parasynechococcus marenigrum (strain WH8102)).